The chain runs to 87 residues: Small ribosomal subunit protein uS17 (87 aa).

The protein belongs to the universal ribosomal protein uS17 family. Part of the 30S ribosomal subunit.

Functionally, one of the primary rRNA binding proteins, it binds specifically to the 5'-end of 16S ribosomal RNA. This Oceanobacillus iheyensis (strain DSM 14371 / CIP 107618 / JCM 11309 / KCTC 3954 / HTE831) protein is Small ribosomal subunit protein uS17.